The following is a 364-amino-acid chain: tRNA 2-selenouridine synthase (364 aa).

The region spanning 15–138 (FVNDTPLMDM…LRRFLIETID (124 aa)) is the Rhodanese domain. Cysteine 98 serves as the catalytic S-selanylcysteine intermediate.

The protein belongs to the SelU family. As to quaternary structure, monomer.

It catalyses the reaction 5-methylaminomethyl-2-thiouridine(34) in tRNA + selenophosphate + (2E)-geranyl diphosphate + H2O + H(+) = 5-methylaminomethyl-2-selenouridine(34) in tRNA + (2E)-thiogeraniol + phosphate + diphosphate. The enzyme catalyses 5-methylaminomethyl-2-thiouridine(34) in tRNA + (2E)-geranyl diphosphate = 5-methylaminomethyl-S-(2E)-geranyl-thiouridine(34) in tRNA + diphosphate. The catalysed reaction is 5-methylaminomethyl-S-(2E)-geranyl-thiouridine(34) in tRNA + selenophosphate + H(+) = 5-methylaminomethyl-2-(Se-phospho)selenouridine(34) in tRNA + (2E)-thiogeraniol. It carries out the reaction 5-methylaminomethyl-2-(Se-phospho)selenouridine(34) in tRNA + H2O = 5-methylaminomethyl-2-selenouridine(34) in tRNA + phosphate. Functionally, involved in the post-transcriptional modification of the uridine at the wobble position (U34) of tRNA(Lys), tRNA(Glu) and tRNA(Gln). Catalyzes the conversion of 2-thiouridine (S2U-RNA) to 2-selenouridine (Se2U-RNA). Acts in a two-step process involving geranylation of 2-thiouridine (S2U) to S-geranyl-2-thiouridine (geS2U) and subsequent selenation of the latter derivative to 2-selenouridine (Se2U) in the tRNA chain. The sequence is that of tRNA 2-selenouridine synthase from Photobacterium profundum (strain SS9).